Reading from the N-terminus, the 142-residue chain is Endoribonuclease YbeY (142 aa).

Zn(2+)-binding residues include His-100, His-104, and His-110.

Belongs to the endoribonuclease YbeY family. The cofactor is Zn(2+).

It is found in the cytoplasm. Functionally, single strand-specific metallo-endoribonuclease involved in late-stage 70S ribosome quality control and in maturation of the 3' terminus of the 16S rRNA. This chain is Endoribonuclease YbeY, found in Helicobacter pylori (strain G27).